Here is a 244-residue protein sequence, read N- to C-terminus: 1-(5-phosphoribosyl)-5-[(5-phosphoribosylamino)methylideneamino] imidazole-4-carboxamide isomerase (244 aa).

Asp10 functions as the Proton acceptor in the catalytic mechanism. The active-site Proton donor is the Asp132.

The protein belongs to the HisA/HisF family.

It is found in the cytoplasm. It carries out the reaction 1-(5-phospho-beta-D-ribosyl)-5-[(5-phospho-beta-D-ribosylamino)methylideneamino]imidazole-4-carboxamide = 5-[(5-phospho-1-deoxy-D-ribulos-1-ylimino)methylamino]-1-(5-phospho-beta-D-ribosyl)imidazole-4-carboxamide. It participates in amino-acid biosynthesis; L-histidine biosynthesis; L-histidine from 5-phospho-alpha-D-ribose 1-diphosphate: step 4/9. The polypeptide is 1-(5-phosphoribosyl)-5-[(5-phosphoribosylamino)methylideneamino] imidazole-4-carboxamide isomerase (Xanthomonas axonopodis pv. citri (strain 306)).